The primary structure comprises 281 residues: Protein ZAR1-like 1.L (281 aa).

A 3CxxC-type zinc finger spans residues 183–267 (QKYGFFHCKN…QELCGRCKGQ (85 aa)).

It belongs to the ZAR1 family. In terms of assembly, component of a cytoplasmic ribonucleoprotein complex together with eif4enif1/4E-T and cpeb1. In terms of tissue distribution, expressed in oocytes.

The protein resides in the cytoplasm. The protein localises to the cytoplasmic ribonucleoprotein granule. In terms of biological role, mRNA-binding protein required for maternal mRNA storage, translation and degradation during oocyte maturation. Controls timing of meiosis during oogenesis. Probably promotes formation of some phase-separated membraneless compartment that stores maternal mRNAs in oocytes: acts by undergoing liquid-liquid phase separation upon binding to maternal mRNAs. Binds to the 3'-UTR of maternal mRNAs, inhibiting their translation. The polypeptide is Protein ZAR1-like 1.L (Xenopus laevis (African clawed frog)).